A 95-amino-acid polypeptide reads, in one-letter code: MNLKPLNDRVLVKRLESEEKTAGGLFIPDTAKEKPSRGEVVAAGPGKVAEDGKLIAMTVKKGDTVLFSKYAGTEIKLDGVEHLVMREDDILAIIE.

The protein belongs to the GroES chaperonin family. Heptamer of 7 subunits arranged in a ring. Interacts with the chaperonin GroEL.

It is found in the cytoplasm. Its function is as follows. Together with the chaperonin GroEL, plays an essential role in assisting protein folding. The GroEL-GroES system forms a nano-cage that allows encapsulation of the non-native substrate proteins and provides a physical environment optimized to promote and accelerate protein folding. GroES binds to the apical surface of the GroEL ring, thereby capping the opening of the GroEL channel. In Nitratidesulfovibrio vulgaris (strain DSM 19637 / Miyazaki F) (Desulfovibrio vulgaris), this protein is Co-chaperonin GroES.